We begin with the raw amino-acid sequence, 349 residues long: Hepatic sodium/bile acid cotransporter (349 aa).

The Extracellular portion of the chain corresponds to methionine 1–proline 22. Residues asparagine 5 and asparagine 11 are each glycosylated (N-linked (GlcNAc...) asparagine). A helical membrane pass occupies residues threonine 23 to cysteine 44. Over threonine 45–glutamate 47 the chain is Cytoplasmic. Residues phenylalanine 48–phenylalanine 83 traverse the membrane as a helical segment. At arginine 84–lysine 86 the chain is on the extracellular side. Residues asparagine 87 to methionine 112 form a discontinuously helical membrane-spanning segment. Topologically, residues lysine 113–aspartate 115 are cytoplasmic. A helical membrane pass occupies residues methionine 116 to serine 142. The Extracellular portion of the chain corresponds to arginine 143–tyrosine 156. The helical transmembrane segment at lysine 157–lysine 179 threads the bilayer. Over arginine 180–tyrosine 183 the chain is Cytoplasmic. A helical membrane pass occupies residues methionine 184 to alanine 217. The Extracellular portion of the chain corresponds to methionine 218–threonine 219. A helical membrane pass occupies residues proline 220 to leucine 243. The Cytoplasmic segment spans residues phenylalanine 244–asparagine 247. The chain crosses the membrane as a discontinuously helical span at residues glycine 248–alanine 273. The Extracellular segment spans residues phenylalanine 274 to glycine 280. A helical membrane pass occupies residues proline 281 to lysine 311. Residues threonine 312–alanine 349 lie on the Cytoplasmic side of the membrane.

The protein belongs to the bile acid:sodium symporter (BASS) (TC 2.A.28) family. (Microbial infection) Interacts with the myristoylated pre-S1 domain of hepatitis B virus large envelope protein; myristoylation is essential for this interaction. As to expression, expressed in liver. Expressed in placental trophoblasts.

The protein resides in the cell membrane. The enzyme catalyses taurocholate(out) + 2 Na(+)(out) = taurocholate(in) + 2 Na(+)(in). It catalyses the reaction cholate(out) + 2 Na(+)(out) = cholate(in) + 2 Na(+)(in). It carries out the reaction estrone 3-sulfate(out) + 2 Na(+)(out) = estrone 3-sulfate(in) + 2 Na(+)(in). The catalysed reaction is taurochenodeoxycholate(out) + 2 Na(+)(out) = taurochenodeoxycholate(in) + 2 Na(+)(in). The enzyme catalyses tauroursodeoxycholate(out) + 2 Na(+)(out) = tauroursodeoxycholate(in) + 2 Na(+)(in). It catalyses the reaction glycocholate(out) + 2 Na(+)(out) = glycocholate(in) + 2 Na(+)(in). It carries out the reaction tauronorcholate(out) + 2 Na(+)(out) = tauronorcholate(in) + 2 Na(+)(in). The catalysed reaction is taurodeoxycholate(out) + 2 Na(+)(out) = taurodeoxycholate(in) + 2 Na(+)(in). The enzyme catalyses tauroallocholate(out) + 2 Na(+)(out) = tauroallocholate(in) + 2 Na(+)(in). It catalyses the reaction taurohyodeoxycholate(out) + 2 Na(+)(out) = taurohyodeoxycholate(in) + 2 Na(+)(in). It carries out the reaction taurohyocholate(out) + 2 Na(+)(out) = taurohyocholate(in) + 2 Na(+)(in). The catalysed reaction is tauro-beta-muricholate(out) + 2 Na(+)(out) = tauro-beta-muricholate(in) + 2 Na(+)(in). The transport of bile acids is sodium-dependent. In terms of biological role, as a major transporter of conjugated bile salts from plasma into the hepatocyte, it plays a key role in the enterohepatic circulation of bile salts necessary for the solubilization and absorption of dietary fat and fat-soluble vitamins. It is strictly dependent on the extracellular presence of sodium. It exhibits broad substrate specificity and transports various bile acids, such as taurocholate, cholate, as well as non-bile acid organic compounds, such as estrone sulfate. Works collaboratively with the ileal transporter (NTCP2), the organic solute transporter (OST), and the bile salt export pump (BSEP), to ensure efficacious biological recycling of bile acids during enterohepatic circulation. Functionally, (Microbial infection) Acts as an entry receptor for hepatitis B virus (HBV). The recognition for human SLC10A1/NTCP is highly specific. The chain is Hepatic sodium/bile acid cotransporter (SLC10A1) from Homo sapiens (Human).